A 247-amino-acid chain; its full sequence is MHTQVLFEHPLNEKMRTWLRIEFLIQQLSINLPIADHAGALHFFRNISDLLDVFERGEVRTELLKELERQQRKLQAWVEVPGVDQDRIEALRQQLKSAGSVLISAPRIGQQLREDRLIALVRQRLSIPGGCCSFDLPTLHIWLHLQQAQRDAQIESWLASLNPLTQALTLVLDLIRNSAPFRKQTSLNGFYQDNGDDADLLRLMLMLDSQLYPQISGHKSRFAIRFMPLDSENGLVPERLDFELACC.

It belongs to the ZapD family. Interacts with FtsZ.

Its subcellular location is the cytoplasm. Functionally, cell division factor that enhances FtsZ-ring assembly. Directly interacts with FtsZ and promotes bundling of FtsZ protofilaments, with a reduction in FtsZ GTPase activity. This chain is Cell division protein ZapD, found in Salmonella agona (strain SL483).